The sequence spans 510 residues: Inositol-3-phosphate synthase (510 aa).

NAD(+) contacts are provided by Gly70, Gly71, Asn72, Asn73, Asp143, Ile180, Gln190, Arg193, Thr230, Ala231, Asn232, Thr233, Gly281, Ser282, Asp306, Ser309, Asn340, Asn341, Asp342, Lys355, Ala393, Asp394, Asp422, and Ser423.

It belongs to the myo-inositol 1-phosphate synthase family. It depends on NAD(+) as a cofactor.

It is found in the cytoplasm. The protein localises to the cytosol. The protein resides in the nucleus. It carries out the reaction D-glucose 6-phosphate = 1D-myo-inositol 3-phosphate. It participates in polyol metabolism; myo-inositol biosynthesis; myo-inositol from D-glucose 6-phosphate: step 1/2. Its function is as follows. Key enzyme in myo-inositol biosynthesis pathway that catalyzes the conversion of glucose 6-phosphate to 1-myo-inositol 1-phosphate in a NAD-dependent manner. This Brassica napus (Rape) protein is Inositol-3-phosphate synthase.